The following is a 301-amino-acid chain: 33 kDa chaperonin (301 aa).

Intrachain disulfides connect cysteine 239–cysteine 241 and cysteine 272–cysteine 275.

This sequence belongs to the HSP33 family. Under oxidizing conditions two disulfide bonds are formed involving the reactive cysteines. Under reducing conditions zinc is bound to the reactive cysteines and the protein is inactive.

It localises to the cytoplasm. Functionally, redox regulated molecular chaperone. Protects both thermally unfolding and oxidatively damaged proteins from irreversible aggregation. Plays an important role in the bacterial defense system toward oxidative stress. This is 33 kDa chaperonin from Trichormus variabilis (strain ATCC 29413 / PCC 7937) (Anabaena variabilis).